The following is a 599-amino-acid chain: uncharacterized protein (599 aa).

This is an uncharacterized protein from Acanthamoeba polyphaga (Amoeba).